The following is a 1025-amino-acid chain: Multidrug resistance protein MdtC (1025 aa).

A run of 12 helical transmembrane segments spans residues 3-23 (FFAL…AITL), 333-353 (EVEQ…FLFL), 360-380 (IIPA…MYLC), 387-407 (LSLM…IVVL), 431-451 (VGFT…PLLL), 463-483 (FAVT…TLTP), 528-548 (LVGA…ISIP), 853-873 (VILI…LYES), 875-895 (VHPL…LLAL), 897-917 (LFNA…IGIV), 953-973 (PIMM…LSGG), and 984-1004 (ITIV…TPVV).

The protein belongs to the resistance-nodulation-cell division (RND) (TC 2.A.6) family. MdtC subfamily. In terms of assembly, part of a tripartite efflux system composed of MdtA, MdtB and MdtC. MdtC forms a heteromultimer with MdtB.

Its subcellular location is the cell inner membrane. Its function is as follows. The MdtABC tripartite complex confers resistance against novobiocin and deoxycholate. This Escherichia coli O81 (strain ED1a) protein is Multidrug resistance protein MdtC.